The chain runs to 1165 residues: uncharacterized protein (1165 aa).

Residues 422-442 (EAAPPRPPRKSKAPEPTGDKA) form a disordered region.

This is an uncharacterized protein from Frog virus 3 (isolate Goorha) (FV-3).